A 74-amino-acid chain; its full sequence is Anaphase-promoting complex subunit 13 (74 aa).

The disordered stretch occupies residues 33–53 (LNELPDPEQDNGGTTESVKEQ).

Belongs to the APC13 family. As to quaternary structure, the mammalian APC/C is composed at least of 14 distinct subunits ANAPC1, ANAPC2, CDC27/APC3, ANAPC4, ANAPC5, CDC16/APC6, ANAPC7, CDC23/APC8, ANAPC10, ANAPC11, CDC26/APC12, ANAPC13, ANAPC15 and ANAPC16 that assemble into a complex of at least 19 chains with a combined molecular mass of around 1.2 MDa; APC/C interacts with FZR1 and FBXO5.

Its subcellular location is the nucleus. It functions in the pathway protein modification; protein ubiquitination. Component of the anaphase promoting complex/cyclosome (APC/C), a cell cycle-regulated E3 ubiquitin ligase that controls progression through mitosis and the G1 phase of the cell cycle. The APC/C complex acts by mediating ubiquitination and subsequent degradation of target proteins: it mainly mediates the formation of 'Lys-11'-linked polyubiquitin chains and, to a lower extent, the formation of 'Lys-48'- and 'Lys-63'-linked polyubiquitin chains. The APC/C complex catalyzes assembly of branched 'Lys-11'-/'Lys-48'-linked branched ubiquitin chains on target proteins. This chain is Anaphase-promoting complex subunit 13 (ANAPC13), found in Pongo abelii (Sumatran orangutan).